The chain runs to 252 residues: MSSLKRIVWFPILAIAIQILSIHTVLSQSQNNAFLFHKCSDIEGSFTSKSLYESNLNNLFSQLSYKVPSTGFAASSTGNTPNNVNGLALCRGDASSSDCRSCLETAIPELRQRCPNNKAGIVWYDNCLVKYSSTNFFGKIDFENRFYLYNVKNVSDPSTFNSQTKALLTELTKKATTRDNQKLFATGEKNIGKNKLYGLVQCTRDLKSITCKACLNGIIGELPNCCDGKEGGRVVGGSCNFRYEIYPFVKTA.

The first 27 residues, 1 to 27 (MSSLKRIVWFPILAIAIQILSIHTVLS), serve as a signal peptide directing secretion. 2 consecutive Gnk2-homologous domains span residues 34 to 136 (FLFH…STNF) and 142 to 248 (FENR…IYPF).

This sequence belongs to the cysteine-rich repeat secretory protein family.

It is found in the secreted. The polypeptide is Cysteine-rich repeat secretory protein 38 (CRRSP38) (Arabidopsis thaliana (Mouse-ear cress)).